The primary structure comprises 412 residues: Homoserine dehydrogenase (412 aa).

NADP(+) contacts are provided by residues 9–16 (LGIGTVGG) and Lys105. Glu190 serves as a coordination point for substrate. The active-site Proton donor is the Lys205. The region spanning 330-407 (YLRLRAVDKP…ISGKVTRLRM (78 aa)) is the ACT domain.

Belongs to the homoserine dehydrogenase family.

The enzyme catalyses L-homoserine + NADP(+) = L-aspartate 4-semialdehyde + NADPH + H(+). The catalysed reaction is L-homoserine + NAD(+) = L-aspartate 4-semialdehyde + NADH + H(+). The protein operates within amino-acid biosynthesis; L-methionine biosynthesis via de novo pathway; L-homoserine from L-aspartate: step 3/3. It participates in amino-acid biosynthesis; L-threonine biosynthesis; L-threonine from L-aspartate: step 3/5. In Methylobacillus glycogenes, this protein is Homoserine dehydrogenase (hom).